The sequence spans 815 residues: DNA gyrase subunit B (815 aa).

The interval 1–21 is disordered; the sequence is MEKTPATGSAVAPPPVEYGTD. A Toprim domain is found at 430–545; the sequence is SELYIVEGDS…AISTSRSRRS (116 aa). Positions 436, 509, and 511 each coordinate Mg(2+).

The protein belongs to the type II topoisomerase GyrB family. In terms of assembly, heterotetramer, composed of two GyrA and two GyrB chains. In the heterotetramer, GyrA contains the active site tyrosine that forms a transient covalent intermediate with DNA, while GyrB binds cofactors and catalyzes ATP hydrolysis. Requires Mg(2+) as cofactor. It depends on Mn(2+) as a cofactor. The cofactor is Ca(2+).

It localises to the cytoplasm. It catalyses the reaction ATP-dependent breakage, passage and rejoining of double-stranded DNA.. Functionally, a type II topoisomerase that negatively supercoils closed circular double-stranded (ds) DNA in an ATP-dependent manner to modulate DNA topology and maintain chromosomes in an underwound state. Negative supercoiling favors strand separation, and DNA replication, transcription, recombination and repair, all of which involve strand separation. Also able to catalyze the interconversion of other topological isomers of dsDNA rings, including catenanes and knotted rings. Type II topoisomerases break and join 2 DNA strands simultaneously in an ATP-dependent manner. This Myxococcus xanthus protein is DNA gyrase subunit B.